The sequence spans 405 residues: MSEKRRDNRGRILKTGESQRKDGRYLYKYIDSFGEPQFVYSWKLVATDRVPAGKRDCISLREKIAELQKDIHDGIDVVGKKMTLCQLYAKQNAQRPKVRKNTETGRKYLMDILKKDKLGVRSIDSIKPSDAKEWAIRMSENGYAYQTINNYKRSLKASFYIAIQDDCVRKNPFDFQLKAVLDDDTVPKTVLTEEQEEKLLAFAKADKTYSKNYDEILILLKTGLRISEFGGLTLPDLDFENRLVNIDHQLLRDTEIGYYIETPKTKSGERQVPMVEEAYQAFKRVLANRKNDKRVEIDGYSDFLFLNRKNYPKVASDYNGMMKGLVKKYNKYNEDKLPHITPHSLRHTFCTNYANAGMNPKALQYIMGHANIAMTLNYYAHATFDSAMAEMKRLNKEKQQERLVA.

The 85-residue stretch at 79–163 (GKKMTLCQLY…SLKASFYIAI (85 aa)) folds into the Core-binding (CB) domain. Positions 186–392 (VPKTVLTEEQ…TFDSAMAEMK (207 aa)) constitute a Tyr recombinase domain. Catalysis depends on residues R225, K264, H343, R346, and H369. Catalysis depends on Y379, which acts as the O-(3'-phospho-DNA)-tyrosine intermediate.

Belongs to the 'phage' integrase family.

This chain is Transposase from transposon Tn916 (Int-Tn), found in Enterococcus faecalis (Streptococcus faecalis).